A 208-amino-acid polypeptide reads, in one-letter code: GTP-binding protein YPTM1 (208 aa).

GTP contacts are provided by residues 15 to 23 (GDSSVGKSC), 33 to 40 (YVDSYIST), 63 to 67 (DTAGQ), 121 to 124 (NKCD), and 151 to 153 (SAK). The Effector region motif lies at 37–45 (YISTIGVDF). The disordered stretch occupies residues 189-208 (QMKGRPIQQEQQKSSRCCST). Positions 196–208 (QQEQQKSSRCCST) are enriched in polar residues. 2 S-geranylgeranyl cysteine lipidation sites follow: Cys205 and Cys206.

The protein belongs to the small GTPase superfamily. Rab family. In terms of tissue distribution, low levels in coleoptiles.

Its subcellular location is the cell membrane. Functionally, protein transport. Probably involved in vesicular traffic. This Zea mays (Maize) protein is GTP-binding protein YPTM1 (YPTM1).